The following is a 571-amino-acid chain: MSDKHPGPLVVEGKLADAERLKKESNFLRGTIAEDLKDGLTGGFTGDNFLLIRFHGMYQQDDRDIRAERAEQKLEPRHAMMLRCRLPGGIISPQQWLGIDKFAQESTLYGSIRITNRQTFQFHGILKGNVKPVHQLLGRLGLDALATANDVNRNVLCTSNPVESELHQEAYEWAKKISEHLLPRTRAYAEVWLDQEKVATTDEEPILGATYLPRKFKTTVVIPPQNDVDLHANDMNFVAIAKNGKLVGFNLLVGGGLSIEHGNKKTYARQASEFGYIPLEHTLAVAEAVVTTQRDWGNRTDRKNAKTKYTLERVGVDTFRAEVEKRAGITFEPIRPYEFTGRGDRIGWVKGIDNQWHLTLFIENGRLLDYPGRPLKTGVAEIARIHKGDFRLTANQNLIVAGVPESEKAKIEALARDHGLIDDGVSVQRQNSMACVSFPTCPLAMAEAERFLPEFVTKVEGILHRHGVGDEHIVLRITGCPNGCGRALLAEIGLVGKAVGRYNLHLGGNREGTRIPRMYRENINEEEILREIDQLVGRWATERTAGEGFGDFTIRAGVVRPVVDPAQDFWD.

[4Fe-4S] cluster contacts are provided by Cys-435, Cys-441, Cys-480, and Cys-484. Cys-484 serves as a coordination point for siroheme.

This sequence belongs to the nitrite and sulfite reductase 4Fe-4S domain family. Alpha(8)-beta(8). The alpha component is a flavoprotein, the beta component is a hemoprotein. Siroheme serves as cofactor. Requires [4Fe-4S] cluster as cofactor.

It carries out the reaction hydrogen sulfide + 3 NADP(+) + 3 H2O = sulfite + 3 NADPH + 4 H(+). Its pathway is sulfur metabolism; hydrogen sulfide biosynthesis; hydrogen sulfide from sulfite (NADPH route): step 1/1. In terms of biological role, component of the sulfite reductase complex that catalyzes the 6-electron reduction of sulfite to sulfide. This is one of several activities required for the biosynthesis of L-cysteine from sulfate. This Serratia proteamaculans (strain 568) protein is Sulfite reductase [NADPH] hemoprotein beta-component.